The sequence spans 404 residues: ATP phosphoribosyltransferase regulatory subunit (404 aa).

The protein belongs to the class-II aminoacyl-tRNA synthetase family. HisZ subfamily. In terms of assembly, heteromultimer composed of HisG and HisZ subunits.

It localises to the cytoplasm. The protein operates within amino-acid biosynthesis; L-histidine biosynthesis; L-histidine from 5-phospho-alpha-D-ribose 1-diphosphate: step 1/9. Required for the first step of histidine biosynthesis. May allow the feedback regulation of ATP phosphoribosyltransferase activity by histidine. This Trichormus variabilis (strain ATCC 29413 / PCC 7937) (Anabaena variabilis) protein is ATP phosphoribosyltransferase regulatory subunit.